Here is a 332-residue protein sequence, read N- to C-terminus: Putative pumilio homolog 17 (332 aa).

A PUM-HD domain is found at 1-302 (MTNINRLSMS…ILTADLFYSL (302 aa)). Residues 82 to 117 (SDSDYFMVITRNKNGSKSLQKLMRMSDDMDVFFFVA) form a Pumilio 1 repeat. One copy of the Pumilio 2; degenerate repeat lies at 118–152 (IMRLFIHVMIDKYASYVAIQGMRIFKQDKRELMYD). Pumilio repeat units follow at residues 153-188 (HILR…DELM), 189-225 (DIVS…NIAD), 226-264 (KLCG…DLLA), and 265-300 (CKTE…DLFY).

It is found in the cytoplasm. Functionally, sequence-specific RNA-binding protein that regulates translation and mRNA stability by binding the 3'-UTR of target mRNAs. The polypeptide is Putative pumilio homolog 17 (APUM17) (Arabidopsis thaliana (Mouse-ear cress)).